An 81-amino-acid chain; its full sequence is Costars family protein ABRACL (81 aa).

This sequence belongs to the costars family.

This is Costars family protein ABRACL (abracl) from Xenopus laevis (African clawed frog).